The primary structure comprises 468 residues: Secreted triacylglycerol lipase LIP2 (468 aa).

A signal peptide spans 1–22; sequence MFGFRLFILAAVALAYIQCAAA. A disulfide bridge links Cys-125 with Cys-295. Residue Ser-209 is the Nucleophile of the active site. N-linked (GlcNAc...) asparagine glycosylation is found at Asn-242, Asn-252, and Asn-279. Residues Asp-355 and His-389 contribute to the active site.

This sequence belongs to the AB hydrolase superfamily. Lipase family. Class Lip subfamily.

Its subcellular location is the secreted. It catalyses the reaction a triacylglycerol + H2O = a diacylglycerol + a fatty acid + H(+). The catalysed reaction is a monoacylglycerol + H2O = glycerol + a fatty acid + H(+). It carries out the reaction a diacylglycerol + H2O = a monoacylglycerol + a fatty acid + H(+). In terms of biological role, secreted lipase that hydrolyzes acylglycerol lipids such as triacylglycerols and consequently releases free fatty acid. Due to an absence of fatty acid synthase genes in Malassezia species, secretory lipases are essential for the yeast to generate free fatty acids from degradation of sebum and assimilate them as lipid sources for growth. Plays important roles not only in lipid metabolism but also in the immune response of host cells and pathogenesis. This Malassezia furfur (Pityriasis versicolor infection agent) protein is Secreted triacylglycerol lipase LIP2.